Reading from the N-terminus, the 477-residue chain is Delayed-rectifier potassium channel regulatory subunit KCNS2 (477 aa).

Over 1–184 (MTGQSLWDVS…LALDNPGYSV (184 aa)) the chain is Cytoplasmic. A helical membrane pass occupies residues 185 to 206 (LSRVFSILSILVVMGSIITMCL). The Extracellular portion of the chain corresponds to 207 to 225 (NSLPDFQIPDSQGNPGEDP). The chain crosses the membrane as a helical span at residues 226–248 (RFEIVEHFGIAWFTFELVARFAV). Residues 249–259 (APDFLKFFKNA) lie on the Cytoplasmic side of the membrane. A helical transmembrane segment spans residues 260–280 (LNLIDLMSIVPFYITLVVNLV). The Extracellular segment spans residues 281-290 (VESTPTLANL). Residues 291-311 (GRVAQVLRLMRIFRILKLARH) form a helical; Voltage-sensor membrane-spanning segment. Residues 312 to 326 (STGLRSLGATLKYSY) lie on the Cytoplasmic side of the membrane. A helical membrane pass occupies residues 327-348 (KEVGLLLLYLSVGISIFSVVAY). Residues 349 to 361 (TIEKEENEGLATI) are Extracellular-facing. Positions 362–373 (PACWWWATVSMT) form an intramembrane region, helical. The short motif at 374–379 (TVGYGD) is the Selectivity filter element. An intramembrane segment occupies 374 to 381 (TVGYGDVV). Topologically, residues 382 to 388 (PGTTAGK) are extracellular. The chain crosses the membrane as a helical span at residues 389-417 (LTASACILAGILVVVLPITLIFNKFSHFY). The Cytoplasmic portion of the chain corresponds to 418-477 (RRQKQLESAMRSCDFGDGMKEVPSVNLRDYYAHKVKSLMASLTNMSRSSPSELSLNDSLR).

It belongs to the potassium channel family. S (TC 1.A.1.2) subfamily. Kv9.2/KCNS2 sub-subfamily. As to quaternary structure, heterotetramer with KCNB1 and KCNB2. Does not form homomultimers.

It is found in the cell membrane. Functionally, potassium channel regulatory subunit that modulate the delayed rectifier voltage-gated potassium channel activity of KCNB1 and KCNB2 by altering their kinetics, expression levels, and shifting the half-inactivation potential to more polarized values. While it does not form functional channels on its own, it can form functional heterotetrameric channels with KCNB1 and KCNB2. Each regulatory subunit has unique regulatory properties that can lead to extensive inhibition, significant changes in kinetics, and/or substantial shifts in the voltage dependencies of the inactivation process. This Homo sapiens (Human) protein is Delayed-rectifier potassium channel regulatory subunit KCNS2.